We begin with the raw amino-acid sequence, 518 residues long: Putative BTB/POZ domain and WD-repeat protein R731 (518 aa).

The region spanning 22–92 (TDCQLHLTDS…FYGFPLEEPN (71 aa)) is the BTB domain. The segment at 224–246 (NHEESSDDEVNDDEDTDNEDTDD) is disordered. Over residues 228-246 (SSDDEVNDDEDTDNEDTDD) the composition is skewed to acidic residues. WD repeat units follow at residues 391–430 (NHSTTINHILYSPKSKYFIFCDENSIIYVYSTKDNYSLIK) and 437–475 (FLKFGVKDFEFMTSKIIVAIDIKGKICIWNIETEQIIQN).

The protein belongs to the mimivirus BTB/WD family.

In Acanthamoeba polyphaga (Amoeba), this protein is Putative BTB/POZ domain and WD-repeat protein R731.